Reading from the N-terminus, the 129-residue chain is Large ribosomal subunit protein eL32 (129 aa).

Belongs to the eukaryotic ribosomal protein eL32 family.

This chain is Large ribosomal subunit protein eL32 (rpl32e), found in Methanosarcina mazei (strain ATCC BAA-159 / DSM 3647 / Goe1 / Go1 / JCM 11833 / OCM 88) (Methanosarcina frisia).